Reading from the N-terminus, the 212-residue chain is Pyrrolidone-carboxylate peptidase (212 aa).

Active-site residues include Glu-78, Cys-141, and His-165.

Belongs to the peptidase C15 family. In terms of assembly, homotetramer.

It is found in the cytoplasm. It catalyses the reaction Release of an N-terminal pyroglutamyl group from a polypeptide, the second amino acid generally not being Pro.. Functionally, removes 5-oxoproline from various penultimate amino acid residues except L-proline. The sequence is that of Pyrrolidone-carboxylate peptidase from Staphylococcus aureus (strain NCTC 8325 / PS 47).